A 229-amino-acid chain; its full sequence is Large ribosomal subunit protein uL1 (229 aa).

Belongs to the universal ribosomal protein uL1 family. As to quaternary structure, part of the 50S ribosomal subunit.

In terms of biological role, binds directly to 23S rRNA. The L1 stalk is quite mobile in the ribosome, and is involved in E site tRNA release. Protein L1 is also a translational repressor protein, it controls the translation of the L11 operon by binding to its mRNA. The polypeptide is Large ribosomal subunit protein uL1 (Streptococcus agalactiae serotype Ia (strain ATCC 27591 / A909 / CDC SS700)).